Reading from the N-terminus, the 432-residue chain is Solute carrier family 35 member F5 (432 aa).

Residues 1–33 (MFLPSTTNHSSAPLQKHLCLFCTFWALLFGSHG) form the signal peptide. Ser116 is modified (phosphoserine). The next 8 helical transmembrane spans lie at 152-172 (ISFF…EALS), 177-197 (AIVN…AAVF), 205-225 (FTLS…LVNL), 236-256 (TIGS…IVMI), 270-290 (MFFG…FFLL), 304-324 (VVLM…EFLW), 329-349 (FLTS…LSII), and 361-381 (WLFF…TLLC). Residues 161–225 (FLANLSYQEA…SIGGVVLVNL (65 aa)) enclose the EamA domain.

Belongs to the SLC35F solute transporter family.

It localises to the membrane. Its function is as follows. Putative solute transporter. The sequence is that of Solute carrier family 35 member F5 (SLC35F5) from Macaca fascicularis (Crab-eating macaque).